Here is a 640-residue protein sequence, read N- to C-terminus: Probable potassium transport system protein Kup 1 (640 aa).

Transmembrane regions (helical) follow at residues 24–44 (LGALSLAAIGVVYGDIGTSPL), 67–87 (IASLVFWAIILVVTIKYVLFV), 116–136 (VGPLVGLGLFGAALFIGDGMI), 154–174 (PFFAPYVVPLTLIVLVALFTI), 186–206 (FGPVMVVWFLTIAALGLTEVV), 222–242 (TFLFTHGWIAFVVMGSVVLAV), 264–284 (WFALVLPALTLNYFGQAALIL), 296–316 (MLVPGWGLYPMVILATLATVI), 354–374 (IYIPRANWGLLLGIVALVVGF), 382–402 (AAYGIAVTGTMAATTILALVV), 411–431 (LWLCLGLGAVFLAVDLGFLGA), and 436–456 (VTQGGWFPLAVGLGMLLLMAT).

Belongs to the HAK/KUP transporter (TC 2.A.72) family.

It localises to the cell inner membrane. The catalysed reaction is K(+)(in) + H(+)(in) = K(+)(out) + H(+)(out). Transport of potassium into the cell. Likely operates as a K(+):H(+) symporter. In Paramagnetospirillum magneticum (strain ATCC 700264 / AMB-1) (Magnetospirillum magneticum), this protein is Probable potassium transport system protein Kup 1.